The primary structure comprises 201 residues: Urease accessory protein UreG (201 aa).

11 to 18 (GPVGSGKT) is a GTP binding site.

This sequence belongs to the SIMIBI class G3E GTPase family. UreG subfamily. In terms of assembly, homodimer. UreD, UreF and UreG form a complex that acts as a GTP-hydrolysis-dependent molecular chaperone, activating the urease apoprotein by helping to assemble the nickel containing metallocenter of UreC. The UreE protein probably delivers the nickel.

It is found in the cytoplasm. Functionally, facilitates the functional incorporation of the urease nickel metallocenter. This process requires GTP hydrolysis, probably effectuated by UreG. The sequence is that of Urease accessory protein UreG from Synechococcus sp. (strain CC9605).